Consider the following 368-residue polypeptide: N-acetylneuraminate epimerase (368 aa).

Positions 1–19 (MNKTITALAIMMASFAANA) are cleaved as a signal peptide. Kelch repeat units follow at residues 40–84 (TVYI…AFID), 86–137 (NLYV…FVHN), 139–173 (KAYV…KINA), 174–219 (YYFD…VNKG), 222–265 (TWLI…VAGG), 287–336 (ENYQ…PWNN), and 338–367 (LLII…VTVQ). The active-site Proton acceptor is the Glu228.

Belongs to the NanM family. Homodimer.

Its subcellular location is the periplasm. It carries out the reaction N-acetyl-alpha-neuraminate = N-acetyl-beta-neuraminate. Converts alpha-N-acetylneuranimic acid (Neu5Ac) to the beta-anomer, accelerating the equilibrium between the alpha- and beta-anomers. Probably facilitates sialidase-negative bacteria to compete successfully for limited amounts of extracellular Neu5Ac, which is likely taken up in the beta-anomer. In addition, the rapid removal of sialic acid from solution might be advantageous to the bacterium to damp down host responses. This Shigella boydii serotype 4 (strain Sb227) protein is N-acetylneuraminate epimerase.